Reading from the N-terminus, the 21-residue chain is 5-methyltetrahydropteroyltriglutamate--homocysteine methyltransferase (21 aa).

It belongs to the vitamin-B12 independent methionine synthase family. Requires Zn(2+) as cofactor.

Its subcellular location is the cytoplasm. It catalyses the reaction 5-methyltetrahydropteroyltri-L-glutamate + L-homocysteine = tetrahydropteroyltri-L-glutamate + L-methionine. It functions in the pathway amino-acid biosynthesis; L-methionine biosynthesis via de novo pathway; L-methionine from L-homocysteine (MetE route): step 1/1. Functionally, catalyzes the transfer of a methyl group from 5-methyltetrahydrofolate to homocysteine resulting in methionine formation. The protein is 5-methyltetrahydropteroyltriglutamate--homocysteine methyltransferase of Populus euphratica (Euphrates poplar).